A 219-amino-acid chain; its full sequence is Guanylate kinase (219 aa).

The Guanylate kinase-like domain maps to 15-194 (GLMFVLSSPS…AFAEVQSILK (180 aa)). 22-29 (SPSGAGKT) contributes to the ATP binding site.

This sequence belongs to the guanylate kinase family.

Its subcellular location is the cytoplasm. The catalysed reaction is GMP + ATP = GDP + ADP. Functionally, essential for recycling GMP and indirectly, cGMP. In Nitrobacter winogradskyi (strain ATCC 25391 / DSM 10237 / CIP 104748 / NCIMB 11846 / Nb-255), this protein is Guanylate kinase.